Here is a 136-residue protein sequence, read N- to C-terminus: Translation initiation factor 5A (136 aa).

Residue lysine 37 is modified to Hypusine.

Belongs to the eIF-5A family.

The protein localises to the cytoplasm. Its function is as follows. Functions by promoting the formation of the first peptide bond. The sequence is that of Translation initiation factor 5A (eIF5A) from Thermococcus gammatolerans (strain DSM 15229 / JCM 11827 / EJ3).